The following is a 443-amino-acid chain: MTTRQPIYKSLYFQVIVAIVIGILLGHFYPETGVALKPLGDGFIKLIKMVIAPIIFCTVVSGIAGMQSMKSVGKTGGYALLYFEIVSTVALLIGLIVVNVVQPGAGMHIDVATLDASKVAAYVTAGKDQSIVGFILNVIPNTIVGAFANGDILQVLMFSVIFGFALHRLGAYGKPVLDFIDRFAHVMFNIINMIMKLAPIGALGAMAFTIGAYGVGSLVQLGQLMICFYITCLLFVLVVLGGICRAHGFSVIKLIRYIREELLIVLGTSSSESALPRMLIKMERLGAKKSVVGLVIPTGYSFNLDGTSIYLTMAAVFIAQATDTHMDITHQITLLLVLLLSSKGAAGVTGSGFIVLAATLSAVGHLPVAGLALILGIDRFMSEARALTNLVGNAVATIVVAKWVKELDTDKLQSELASGGTGISETREIDDLGVAEGPAPVVK.

Transmembrane regions (helical) follow at residues 10-30 (SLYF…HFYP), 46-66 (LIKM…IAGM), 78-98 (YALL…LIVV), 143-163 (IVGA…VIFG), 199-219 (PIGA…GSLV), 224-244 (LMIC…GGIC), 291-311 (VVGL…SIYL), 332-352 (ITLL…TGSG), and 354-374 (IVLA…LALI).

This sequence belongs to the dicarboxylate/amino acid:cation symporter (DAACS) (TC 2.A.23) family.

It is found in the cell inner membrane. Responsible for the transport of dicarboxylates such as succinate, fumarate, and malate from the periplasm across the membrane. In Pseudomonas fluorescens (strain SBW25), this protein is C4-dicarboxylate transport protein.